The sequence spans 251 residues: Triosephosphate isomerase (251 aa).

9–11 serves as a coordination point for substrate; sequence NWK. Catalysis depends on His95, which acts as the Electrophile. Glu167 (proton acceptor) is an active-site residue. Residues Gly173, Ser213, and 234–235 each bind substrate; that span reads GG.

This sequence belongs to the triosephosphate isomerase family. In terms of assembly, homodimer.

Its subcellular location is the cytoplasm. The enzyme catalyses D-glyceraldehyde 3-phosphate = dihydroxyacetone phosphate. Its pathway is carbohydrate biosynthesis; gluconeogenesis. The protein operates within carbohydrate degradation; glycolysis; D-glyceraldehyde 3-phosphate from glycerone phosphate: step 1/1. Functionally, involved in the gluconeogenesis. Catalyzes stereospecifically the conversion of dihydroxyacetone phosphate (DHAP) to D-glyceraldehyde-3-phosphate (G3P). The sequence is that of Triosephosphate isomerase from Citrifermentans bemidjiense (strain ATCC BAA-1014 / DSM 16622 / JCM 12645 / Bem) (Geobacter bemidjiensis).